The chain runs to 58 residues: uncharacterized protein (58 aa).

This is an uncharacterized protein from Methanocaldococcus jannaschii (strain ATCC 43067 / DSM 2661 / JAL-1 / JCM 10045 / NBRC 100440) (Methanococcus jannaschii).